The chain runs to 61 residues: Small ribosomal subunit protein uS14 (61 aa).

Zn(2+)-binding residues include Cys-24, Cys-27, Cys-40, and Cys-43.

This sequence belongs to the universal ribosomal protein uS14 family. Zinc-binding uS14 subfamily. As to quaternary structure, part of the 30S ribosomal subunit. Contacts proteins S3 and S10. Zn(2+) serves as cofactor.

Functionally, binds 16S rRNA, required for the assembly of 30S particles and may also be responsible for determining the conformation of the 16S rRNA at the A site. This Deinococcus geothermalis (strain DSM 11300 / CIP 105573 / AG-3a) protein is Small ribosomal subunit protein uS14.